We begin with the raw amino-acid sequence, 375 residues long: Probable G-protein coupled receptor 34 (375 aa).

Residues 1–54 are Extracellular-facing; that stretch reads MTTTSVDSWLCSSHGMHFITNYSDQASQNFSGVPNVTSCPMDEKLLSTVLTTFY. N-linked (GlcNAc...) asparagine glycosylation is found at N21, N29, and N35. A helical transmembrane segment spans residues 55–75; sequence SVIFLVGLVGNIIALYVFLGI. Residues 76–81 are Cytoplasmic-facing; sequence HRKRNS. Residues 82–102 traverse the membrane as a helical segment; it reads IQIYLLNVAVADLLLIFCLPF. At 103–121 the chain is on the extracellular side; that stretch reads RIMYHINQNKWTLGVILCK. C120 and C197 form a disulfide bridge. Residues 122–142 traverse the membrane as a helical segment; that stretch reads VVGTLFYMNMYISIILLGFIS. At 143–164 the chain is on the cytoplasmic side; that stretch reads LDRYIKINRSIQQRRAITTKQS. The helical transmembrane segment at 165–185 threads the bilayer; the sequence is IYVCCIVWTVALAGFLTMIIL. The Extracellular portion of the chain corresponds to 186–209; the sequence is TLKKGGHNSTMCFHYRDRHNAKGE. N-linked (GlcNAc...) asparagine glycosylation is present at N193. Residues 210–230 form a helical membrane-spanning segment; that stretch reads AIFNFVLVVMFWLIFLLIILS. Topologically, residues 231–262 are cytoplasmic; sequence YIKIGKNLLRISKRRSKFPNSGKYATTARNSF. A helical transmembrane segment spans residues 263–283; the sequence is IVLIIFTICFVPYHAFRFIYI. The Extracellular segment spans residues 284–303; that stretch reads SSQLNVSSCYWKEIIHKTNE. N-linked (GlcNAc...) asparagine glycosylation occurs at N288. Residues 304–324 form a helical membrane-spanning segment; sequence IMLVFSSFNSCLDPVMYFLMS. Topologically, residues 325–375 are cytoplasmic; the sequence is SNIRKIMCQLLFRRFQSEASRSESTSEFKPGHSLHDLSVTVKMPQYSTKGN.

It belongs to the G-protein coupled receptor 1 family. Highly expressed in glial cells such as astrocytes and microglia.

It is found in the cell membrane. Its function is as follows. G-protein-coupled receptor of lysophosphatidylserine (LysoPS) that plays different roles in immune response. Acts a damage-sensing receptor that triggers tissue repair upon recognition of dying neutrophils. Mechanistically, apoptotic neutrophils release lysophosphatydilserine that are recognized by type 3 innate lymphoid cells (ILC3s) via GPR34, which activates downstream PI3K-AKT and RAS-ERK signaling pathways leading to STAT3 activation and IL-22 production. Plays an important role in microglial function, controlling morphology and phagocytosis. The polypeptide is Probable G-protein coupled receptor 34 (Gpr34) (Mus musculus (Mouse)).